The primary structure comprises 244 residues: Dirigent protein 18 (244 aa).

Residues methionine 1–alanine 25 form the signal peptide.

Belongs to the plant dirigent protein family. Homodimer.

The protein resides in the secreted. It is found in the extracellular space. Its subcellular location is the apoplast. Dirigent proteins impart stereoselectivity on the phenoxy radical-coupling reaction, yielding optically active lignans from two molecules of coniferyl alcohol in the biosynthesis of lignans, flavonolignans, and alkaloids and thus plays a central role in plant secondary metabolism. The sequence is that of Dirigent protein 18 (DIR18) from Arabidopsis thaliana (Mouse-ear cress).